Here is a 398-residue protein sequence, read N- to C-terminus: Thyrotropin-releasing hormone receptor (398 aa).

The Extracellular portion of the chain corresponds to 1-28 (MENETGSELNQTQLQPRAVVALEYQVVT). Residues asparagine 3 and asparagine 10 are each glycosylated (N-linked (GlcNAc...) asparagine). Residues 29 to 51 (ILLVLIICGLGIVGNIMVVLVVM) form a helical membrane-spanning segment. Topologically, residues 52-61 (RTKHMRTPTN) are cytoplasmic. A helical transmembrane segment spans residues 62-83 (CYLVSLAVADLMVLVAAGLPNI). Over 84-99 (TDSIYGSWVYGYVGCL) the chain is Extracellular. A disulfide bridge links cysteine 98 with cysteine 179. Residues 100–121 (CITYLQYLGINASSCSITAFTI) traverse the membrane as a helical segment. The Cytoplasmic portion of the chain corresponds to 122 to 144 (ERYIAICHPIKAQFLCTFSRAKK). Residues 145 to 168 (IIIFVWAFTSIYCMLWFFLLDLNI) form a helical membrane-spanning segment. The Extracellular segment spans residues 169-193 (STYKDAIVVSCGYKISRNYYSPIYL). Residues 194–215 (MDFGVFYVVPMILATVLYGFIA) form a helical membrane-spanning segment. Topologically, residues 216-266 (RILFLSPIPSDPKENSNTWKNDSTHQNKNLNSKTSNRYFNSTVSSRKQVTK) are cytoplasmic. The helical transmembrane segment at 267 to 288 (MLAVVVILFALLWMPYRTLVVV) threads the bilayer. At 289–296 (NSFLSSPF) the chain is on the extracellular side. The helical transmembrane segment at 297-319 (QENWFLLFCRICIYLNSAINPVI) threads the bilayer. The Cytoplasmic portion of the chain corresponds to 320–398 (YNLMSQKFRA…LASEVTFSQS (79 aa)).

It belongs to the G-protein coupled receptor 1 family.

The protein resides in the cell membrane. In terms of biological role, receptor for thyrotropin-releasing hormone (TRH). Upon ligand binding, this G-protein-coupled receptor triggers activation of the phosphatidylinositol (IP3)-calcium-protein kinase C (PKC) pathway. This chain is Thyrotropin-releasing hormone receptor (TRHR), found in Ovis aries (Sheep).